Reading from the N-terminus, the 184-residue chain is Shikimate kinase (184 aa).

Position 20–25 (20–25) interacts with ATP; sequence GVGKSR. Residue S24 participates in Mg(2+) binding. Substrate contacts are provided by D42, R66, and G88. Residue R127 coordinates ATP. R146 serves as a coordination point for substrate. R162 contributes to the ATP binding site.

Belongs to the shikimate kinase family. Monomer. The cofactor is Mg(2+).

The protein resides in the cytoplasm. It catalyses the reaction shikimate + ATP = 3-phosphoshikimate + ADP + H(+). It participates in metabolic intermediate biosynthesis; chorismate biosynthesis; chorismate from D-erythrose 4-phosphate and phosphoenolpyruvate: step 5/7. Functionally, catalyzes the specific phosphorylation of the 3-hydroxyl group of shikimic acid using ATP as a cosubstrate. This chain is Shikimate kinase, found in Thermus thermophilus (strain ATCC 27634 / DSM 579 / HB8).